Here is a 171-residue protein sequence, read N- to C-terminus: Endoribonuclease YbeY (171 aa).

The Zn(2+) site is built by H126, H130, and H136.

The protein belongs to the endoribonuclease YbeY family. Zn(2+) is required as a cofactor.

Its subcellular location is the cytoplasm. Its function is as follows. Single strand-specific metallo-endoribonuclease involved in late-stage 70S ribosome quality control and in maturation of the 3' terminus of the 16S rRNA. This chain is Endoribonuclease YbeY, found in Rhizobium johnstonii (strain DSM 114642 / LMG 32736 / 3841) (Rhizobium leguminosarum bv. viciae).